The sequence spans 121 residues: Large ribosomal subunit protein bL12 (121 aa).

The protein belongs to the bacterial ribosomal protein bL12 family. In terms of assembly, homodimer. Part of the ribosomal stalk of the 50S ribosomal subunit. Forms a multimeric L10(L12)X complex, where L10 forms an elongated spine to which 2 to 4 L12 dimers bind in a sequential fashion. Binds GTP-bound translation factors.

Functionally, forms part of the ribosomal stalk which helps the ribosome interact with GTP-bound translation factors. Is thus essential for accurate translation. The protein is Large ribosomal subunit protein bL12 of Clostridium perfringens (strain 13 / Type A).